The chain runs to 139 residues: TDP-4-oxo-6-deoxy-alpha-D-glucose-3,4-oxoisomerase (139 aa).

The Proton acceptor role is filled by His49.

Homodimer.

It carries out the reaction dTDP-4-dehydro-6-deoxy-alpha-D-glucose = dTDP-3-dehydro-6-deoxy-alpha-D-galactose. Its function is as follows. Mediates the isomerization of dTDP-6-deoxy-D-xylohex-4-ulose into dTDP-6-deoxy-D-xylohex-3-ulose in the biosynthesis of dTDP-3-acetamido-3,6-dideoxy-alpha-D-galactose, a glycan chain of the S-layer. This is TDP-4-oxo-6-deoxy-alpha-D-glucose-3,4-oxoisomerase (fdtA) from Aneurinibacillus thermoaerophilus.